Consider the following 702-residue polypeptide: Elongation factor G (702 aa).

The tr-type G domain occupies 8 to 290 (ERYRNIGISA…AVIEYLPAPT (283 aa)). GTP is bound by residues 17–24 (AHIDAGKT), 88–92 (DTPGH), and 142–145 (NKMD).

The protein belongs to the TRAFAC class translation factor GTPase superfamily. Classic translation factor GTPase family. EF-G/EF-2 subfamily.

Its subcellular location is the cytoplasm. Its function is as follows. Catalyzes the GTP-dependent ribosomal translocation step during translation elongation. During this step, the ribosome changes from the pre-translocational (PRE) to the post-translocational (POST) state as the newly formed A-site-bound peptidyl-tRNA and P-site-bound deacylated tRNA move to the P and E sites, respectively. Catalyzes the coordinated movement of the two tRNA molecules, the mRNA and conformational changes in the ribosome. In Yersinia pseudotuberculosis serotype O:1b (strain IP 31758), this protein is Elongation factor G.